A 208-amino-acid chain; its full sequence is MTKGILGKKVGMTQIFTESGEFIPVTVIEATPNVVLQVKTVETDGYEAVQVGFDDKREVLSNKPAKGHVAKANTAPKRFIREFKNIEGLEVGSEITVESFSAGDVVDVTGTSKGKGFQGVIKRHGQSRGPMAHGSRYHRRPGSMGPVAPNRVFKNKHLAGRMGGNRVTIQNLEIVQVIPEKNVILIKGNVPGAKKSLITIKSAVKAAK.

Residues 123–147 (RHGQSRGPMAHGSRYHRRPGSMGPV) form a disordered region.

The protein belongs to the universal ribosomal protein uL3 family. As to quaternary structure, part of the 50S ribosomal subunit. Forms a cluster with proteins L14 and L19.

One of the primary rRNA binding proteins, it binds directly near the 3'-end of the 23S rRNA, where it nucleates assembly of the 50S subunit. This Streptococcus uberis (strain ATCC BAA-854 / 0140J) protein is Large ribosomal subunit protein uL3.